The chain runs to 252 residues: ATP synthase subunit a (252 aa).

A run of 5 helical transmembrane segments spans residues 33–53 (GQVFITTWIVMGILIVAALAA), 92–112 (VPFVGTLFLFIFVCNWSGALV), 130–150 (DINTTVALALLVSLAYFYAGL), 196–216 (LVVGVLVLLVPLFVPLPVMAL), and 217–237 (GLFTSAIQALVFATLAATYIG).

The protein belongs to the ATPase A chain family. In terms of assembly, F-type ATPases have 2 components, CF(1) - the catalytic core - and CF(0) - the membrane proton channel. CF(1) has five subunits: alpha(3), beta(3), gamma(1), delta(1), epsilon(1). CF(0) has three main subunits: a(1), b(2) and c(9-12). The alpha and beta chains form an alternating ring which encloses part of the gamma chain. CF(1) is attached to CF(0) by a central stalk formed by the gamma and epsilon chains, while a peripheral stalk is formed by the delta and b chains.

It is found in the cellular thylakoid membrane. Its function is as follows. Key component of the proton channel; it plays a direct role in the translocation of protons across the membrane. This is ATP synthase subunit a from Synechococcus sp. (strain PCC 6716).